The sequence spans 167 residues: Lipoprotein signal peptidase (167 aa).

The next 4 helical transmembrane spans lie at 5–25, 42–62, 70–90, and 102–122; these read ICST…LDLG, LIPY…SFLA, WFFA…MYRA, and ALII…GFVI. Active-site residues include aspartate 123 and aspartate 141. Residues 137–157 traverse the membrane as a helical segment; that stretch reads FNIADMAICIGAGLVIIDSFL.

Belongs to the peptidase A8 family.

The protein localises to the cell inner membrane. The enzyme catalyses Release of signal peptides from bacterial membrane prolipoproteins. Hydrolyzes -Xaa-Yaa-Zaa-|-(S,diacylglyceryl)Cys-, in which Xaa is hydrophobic (preferably Leu), and Yaa (Ala or Ser) and Zaa (Gly or Ala) have small, neutral side chains.. The protein operates within protein modification; lipoprotein biosynthesis (signal peptide cleavage). Its function is as follows. This protein specifically catalyzes the removal of signal peptides from prolipoproteins. The protein is Lipoprotein signal peptidase of Photorhabdus laumondii subsp. laumondii (strain DSM 15139 / CIP 105565 / TT01) (Photorhabdus luminescens subsp. laumondii).